We begin with the raw amino-acid sequence, 327 residues long: S-adenosylmethionine/S-adenosylhomocysteine transporter (327 aa).

10 helical membrane passes run 22 to 42 (CDMAIFLIFLNAFIWSSSFAL), 53 to 73 (LFVTGSRMVLAGVVLFGLLLC), 85 to 105 (IMPIVLLSVIGFYLTNVLEFI), 114 to 134 (TACFIYGFSPFTAAFCSYVQL), 143 to 163 (LGGLSLGLVSYLVYLLFGGSE), 165 to 185 (VAEWGWQLGLPELLLIAATCL), 202 to 222 (SLSMTAINAYAMVIAGVLSLI), 240 to 260 (LFLQAIGALVIFSNLICYNLF), 271 to 291 (FLSFCNLVMPLFASFFGWLLL), and 294 to 314 (SFPPGLLFAVGFMVLGCRLIY). The EamA 1 domain occupies 34 to 157 (FIWSSSFALS…LGLVSYLVYL (124 aa)). The region spanning 189–313 (GWTLLRKLGR…GFMVLGCRLI (125 aa)) is the EamA 2 domain.

Belongs to the drug/metabolite transporter (DMT) superfamily. 10 TMS drug/metabolite exporter (DME) (TC 2.A.7.3) family.

The protein resides in the cell membrane. Functionally, transports S-adenosylmethionine (SAM) and S-adenosylhomocysteine (SAH). Allows bacteria to acquire SAM from the eukaryotic host cell and to likely remove the toxic by-product SAH. The protein is S-adenosylmethionine/S-adenosylhomocysteine transporter of Chlamydia trachomatis serovar D (strain ATCC VR-885 / DSM 19411 / UW-3/Cx).